A 342-amino-acid polypeptide reads, in one-letter code: tRNA N6-adenosine threonylcarbamoyltransferase (342 aa).

Fe cation contacts are provided by His115 and His119. Residues 137-141 (IVSGG), Asp170, Gly183, Asp187, and Asn276 contribute to the substrate site. Fe cation is bound at residue Asp304.

It belongs to the KAE1 / TsaD family. Fe(2+) serves as cofactor.

It localises to the cytoplasm. The enzyme catalyses L-threonylcarbamoyladenylate + adenosine(37) in tRNA = N(6)-L-threonylcarbamoyladenosine(37) in tRNA + AMP + H(+). Its function is as follows. Required for the formation of a threonylcarbamoyl group on adenosine at position 37 (t(6)A37) in tRNAs that read codons beginning with adenine. Is involved in the transfer of the threonylcarbamoyl moiety of threonylcarbamoyl-AMP (TC-AMP) to the N6 group of A37, together with TsaE and TsaB. TsaD likely plays a direct catalytic role in this reaction. The chain is tRNA N6-adenosine threonylcarbamoyltransferase from Staphylococcus saprophyticus subsp. saprophyticus (strain ATCC 15305 / DSM 20229 / NCIMB 8711 / NCTC 7292 / S-41).